Here is an 857-residue protein sequence, read N- to C-terminus: MGNANTKESRGDDSGRRGLHSALDAGIGSSTQSGRESSRRNRNTRHDLTGLLGRAAGGSSSHADERHERKETKQEREARRLEKERVARLQERERSMKEEHVDGGYLVTMGTYVGPEDFNKQIVRQLMIERKLAPFWRGLNDFDENWTEPQIIAAARGLPIPAAGETPPDELIPRPRSPASPTDASSNTNHLTVPIGGRSLSTASEHSTSNAGSALPSPGSGKGSSSPFKPTRGKAIAAVLGGGSCRNGSSTEIAPREIMLPNDPFVNGQPLEVFLYKNATECPICFLTYPPYLNHTRCCDQPICSECFVQIKRPDPHFPEGHNENDPNNNPEESAGLLVSEPACCPYCTQPDFGVTYEPPPFRRGLTYAISPLALGSTSAAMSSESSVNSGSLSPGVASPGGRRRNQSLSANAPNVVLTDKVRPEWATKLQAARAHLARRAAAATALHTAAFLMNNNESRALRSRFGRRNTGGSGSASATPGNGDENRGTGPATPANAGATANTDRAAGSSGNGNRRSRLEDLEEMMFAEAIRLSLAAEEERKKKAEKEEQKEAKKREKEREKAEKKAEKAAAKAAAKQGGPYEASRSGHSSASGSSLSLPGLSFGRKRGNSAASNLRVEASVASAMASTGAAMTTPAAPGALAPDSSTKDKGKAVDRSAGAASNDASARPIPSPQPMAGPSHLRQMSSASSASSSAVESNQGSYVPPSNLQDPRGSGLSLGGRSGVSEDGDEQDRDPSTSTEPMFNFRSLAEVVGVSIEGEHAGKRLSQINADGQAIEGEDETAKSGEGAGEHVEHVLDSQTTGISEQDSEINSQPPRLTVTLDSPATSVGDVSTASDSKHVGNETTVEHATQVTL.

6 disordered regions span residues Met1–Leu81, Gly157–Thr231, Ser384–Val416, Phe466–Arg517, Lys545–Asn747, and His763–Leu857. 2 stretches are compositionally biased toward basic and acidic residues: residues Lys7–Arg16 and Glu36–Leu48. Positions Thr49–Ser61 are enriched in low complexity. Residues His62–Leu81 are compositionally biased toward basic and acidic residues. Polar residues-rich tracts occupy residues Ala179–Leu191 and Ser199–Thr208. Low complexity-rich tracts occupy residues Ser209–Pro230, Ser384–Ser394, and Ser476–Thr504. Residues Lys545–Ala572 are compositionally biased toward basic and acidic residues. 2 stretches are compositionally biased toward low complexity: residues Ser586–Ser604 and Ala621–Pro645. A compositionally biased stretch (basic and acidic residues) spans Ser648 to Asp657. Over residues Ser688–Ala697 the composition is skewed to low complexity. The span at Val698–Gln712 shows a compositional bias: polar residues. A compositionally biased stretch (basic and acidic residues) spans Glu783 to Leu799. 2 stretches are compositionally biased toward polar residues: residues Asp800–Ser838 and Asn845–Leu857.

It belongs to the SIP5 family.

Its subcellular location is the cytoplasm. Its function is as follows. May negatively regulate the snf-1 kinase. The protein is Protein sip-5 (sip-5) of Neurospora crassa (strain ATCC 24698 / 74-OR23-1A / CBS 708.71 / DSM 1257 / FGSC 987).